We begin with the raw amino-acid sequence, 419 residues long: Serine hydroxymethyltransferase 1 (419 aa).

Residues leucine 121 and 125-127 contribute to the (6S)-5,6,7,8-tetrahydrofolate site; that span reads GHL. At lysine 230 the chain carries N6-(pyridoxal phosphate)lysine. 356 to 358 contributes to the (6S)-5,6,7,8-tetrahydrofolate binding site; it reads SPF.

Belongs to the SHMT family. As to quaternary structure, homodimer. Pyridoxal 5'-phosphate serves as cofactor.

The protein localises to the cytoplasm. It catalyses the reaction (6R)-5,10-methylene-5,6,7,8-tetrahydrofolate + glycine + H2O = (6S)-5,6,7,8-tetrahydrofolate + L-serine. It participates in one-carbon metabolism; tetrahydrofolate interconversion. Its pathway is amino-acid biosynthesis; glycine biosynthesis; glycine from L-serine: step 1/1. In terms of biological role, catalyzes the reversible interconversion of serine and glycine with tetrahydrofolate (THF) serving as the one-carbon carrier. This reaction serves as the major source of one-carbon groups required for the biosynthesis of purines, thymidylate, methionine, and other important biomolecules. Also exhibits THF-independent aldolase activity toward beta-hydroxyamino acids, producing glycine and aldehydes, via a retro-aldol mechanism. The sequence is that of Serine hydroxymethyltransferase 1 from Colwellia psychrerythraea (strain 34H / ATCC BAA-681) (Vibrio psychroerythus).